A 333-amino-acid chain; its full sequence is Anthranilate phosphoribosyltransferase (333 aa).

5-phospho-alpha-D-ribose 1-diphosphate contacts are provided by residues glycine 81, 84-85 (GD), threonine 89, 91-94 (NIST), 109-117 (KHGNRSVSS), and serine 121. An anthranilate-binding site is contributed by glycine 81. Position 93 (serine 93) interacts with Mg(2+). Asparagine 112 provides a ligand contact to anthranilate. Arginine 167 contacts anthranilate. Residues aspartate 225 and glutamate 226 each contribute to the Mg(2+) site.

The protein belongs to the anthranilate phosphoribosyltransferase family. As to quaternary structure, homodimer. Requires Mg(2+) as cofactor.

The enzyme catalyses N-(5-phospho-beta-D-ribosyl)anthranilate + diphosphate = 5-phospho-alpha-D-ribose 1-diphosphate + anthranilate. It participates in amino-acid biosynthesis; L-tryptophan biosynthesis; L-tryptophan from chorismate: step 2/5. Its function is as follows. Catalyzes the transfer of the phosphoribosyl group of 5-phosphorylribose-1-pyrophosphate (PRPP) to anthranilate to yield N-(5'-phosphoribosyl)-anthranilate (PRA). The chain is Anthranilate phosphoribosyltransferase from Glaesserella parasuis serovar 5 (strain SH0165) (Haemophilus parasuis).